Consider the following 495-residue polypeptide: Glycogen synthase (495 aa).

Residue Lys-15 participates in ADP-alpha-D-glucose binding.

It belongs to the glycosyltransferase 1 family. Bacterial/plant glycogen synthase subfamily.

The catalysed reaction is [(1-&gt;4)-alpha-D-glucosyl](n) + ADP-alpha-D-glucose = [(1-&gt;4)-alpha-D-glucosyl](n+1) + ADP + H(+). Its pathway is glycan biosynthesis; glycogen biosynthesis. In terms of biological role, synthesizes alpha-1,4-glucan chains using ADP-glucose. The sequence is that of Glycogen synthase from Variovorax paradoxus (strain S110).